We begin with the raw amino-acid sequence, 152 residues long: Glycine cleavage system H protein, mitochondrial (152 aa).

A mitochondrion-targeting transit peptide spans Met1–Phe31. The 83-residue stretch at Val53 to Lys135 folds into the Lipoyl-binding domain. Lys94 is modified (N6-lipoyllysine).

This sequence belongs to the GcvH family. In terms of assembly, the glycine cleavage system is composed of four proteins: P, T, L and H. The cofactor is (R)-lipoate.

It localises to the mitochondrion. Its function is as follows. The glycine cleavage system catalyzes the degradation of glycine. The H protein shuttles the methylamine group of glycine from the P protein to the T protein. This is Glycine cleavage system H protein, mitochondrial (GDCSH) from Flaveria pubescens (Yellowtops).